Reading from the N-terminus, the 894-residue chain is Myb-like protein K (894 aa).

Low complexity predominate over residues 93–139 (LQQQQQSPVTNVATNTPPTLQHSISSPSPNNFNNNNNANNQFLSPNS). 4 disordered regions span residues 93 to 221 (LQQQ…SASS), 299 to 353 (QVGN…QPIT), 492 to 539 (QQQQ…LEMI), and 601 to 659 (AATT…HWTS). The span at 140 to 149 (PQVAKSSPSQ) shows a compositional bias: polar residues. Over residues 150-221 (NNPSTPIANT…SQSLNSSASS (72 aa)) the composition is skewed to low complexity. The segment covering 300 to 309 (VGNPMQQSND) has biased composition (polar residues). 2 stretches are compositionally biased toward low complexity: residues 310 to 353 (MQPQ…QPIT) and 492 to 527 (QQQQ…PQQM). 2 stretches are compositionally biased toward basic and acidic residues: residues 611–640 (GKEE…SKKD) and 649–659 (ASKEKTSHWTS). An HTH myb-type domain is found at 649-704 (ASKEKTSHWTSEEHNKFLEAVQQFGIKDYHAIAKFVQTRNHHQVRTHVNTYLKNQK). The H-T-H motif DNA-binding region spans 677–700 (YHAIAKFVQTRNHHQVRTHVNTYL). The disordered stretch occupies residues 703-852 (QKKAEAATSS…EYNSGFDSNS (150 aa)). Composition is skewed to low complexity over residues 710–742 (TSST…QPPI), 751–805 (QQQQ…QQPQ), and 815–845 (PPNN…NEYN).

The protein localises to the nucleus. This Dictyostelium discoideum (Social amoeba) protein is Myb-like protein K (mybK).